Reading from the N-terminus, the 101-residue chain is Urease subunit beta (101 aa).

The protein belongs to the urease beta subunit family. In terms of assembly, heterotrimer of UreA (gamma), UreB (beta) and UreC (alpha) subunits. Three heterotrimers associate to form the active enzyme.

It is found in the cytoplasm. It catalyses the reaction urea + 2 H2O + H(+) = hydrogencarbonate + 2 NH4(+). It functions in the pathway nitrogen metabolism; urea degradation; CO(2) and NH(3) from urea (urease route): step 1/1. The sequence is that of Urease subunit beta from Ralstonia pickettii (strain 12J).